Reading from the N-terminus, the 63-residue chain is Sec-independent protein translocase protein TatA (63 aa).

The helical transmembrane segment at 1-21 threads the bilayer; it reads MGSFSMWHWLIVLVIVLLLFG. A disordered region spans residues 42–63; the sequence is GMTDEDAPDTAKTVDHKADETK. Residues 53-63 show a composition bias toward basic and acidic residues; the sequence is KTVDHKADETK.

The protein belongs to the TatA/E family. In terms of assembly, the Tat system comprises two distinct complexes: a TatABC complex, containing multiple copies of TatA, TatB and TatC subunits, and a separate TatA complex, containing only TatA subunits. Substrates initially bind to the TatABC complex, which probably triggers association of the separate TatA complex to form the active translocon.

The protein resides in the cell inner membrane. Functionally, part of the twin-arginine translocation (Tat) system that transports large folded proteins containing a characteristic twin-arginine motif in their signal peptide across membranes. TatA could form the protein-conducting channel of the Tat system. This chain is Sec-independent protein translocase protein TatA, found in Rhizobium leguminosarum bv. trifolii (strain WSM2304).